Consider the following 1058-residue polypeptide: Leucine--tRNA ligase, cytoplasmic (1058 aa).

The short motif at 48-58 (PYMNGRLHVGH) is the 'HIGH' region element. The 'KMSKS' region signature appears at 711–715 (KMSKS). Position 714 (K714) interacts with ATP.

Belongs to the class-I aminoacyl-tRNA synthetase family.

Its subcellular location is the cytoplasm. The enzyme catalyses tRNA(Leu) + L-leucine + ATP = L-leucyl-tRNA(Leu) + AMP + diphosphate. This is Leucine--tRNA ligase, cytoplasmic (leuS) from Dictyostelium discoideum (Social amoeba).